A 90-amino-acid polypeptide reads, in one-letter code: Probable Fe(2+)-trafficking protein (90 aa).

It belongs to the Fe(2+)-trafficking protein family.

In terms of biological role, could be a mediator in iron transactions between iron acquisition and iron-requiring processes, such as synthesis and/or repair of Fe-S clusters in biosynthetic enzymes. The protein is Probable Fe(2+)-trafficking protein of Pseudomonas putida (strain W619).